A 414-amino-acid chain; its full sequence is Acyltransferase MYCGRDRAFT_85486 (414 aa).

Residues 16-25 (DGTSTVTIRP) show a composition bias toward polar residues. The disordered stretch occupies residues 16 to 47 (DGTSTVTIRPTQKAAPSEEPSQDTAPSKKDSN). His-329 contacts substrate. Glu-367 serves as the catalytic Proton acceptor.

It belongs to the lysine N-acyltransferase mbtK family.

Its pathway is siderophore biosynthesis. Functionally, acyltransferase; part of the gene cluster 14 that mediates the biosynthesis of a ferrichrome A-like siderophore which may contribute to organismal virulence. The first step of siderophore biosynthesis is performed by the HMG-CoA synthase (HMGS) MYCGRDRAFT_54740 which catalyzes the generation of HMG-CoA and CoA using acetoacetyl-CoA and acetyl-CoA as substrates. The enoyl-CoA isomerase/hydratase MYCGRDRAFT_76805 then catalyzes the conversion of HMG-CoA to methylglutaconyl-CoA. The acyltransferase MYCGRDRAFT_85486 then fuses methylglutaconyl-CoA with hydroxyornithine to yield methylglutaconyl hydroxyornithine. Methylglutaconyl hydroxyornithine is then available for use by the nonribosomal peptide synthetase NRPS2 to generate the ferrichrome A-like siderophore. The protein is Acyltransferase MYCGRDRAFT_85486 of Zymoseptoria tritici (strain CBS 115943 / IPO323) (Speckled leaf blotch fungus).